A 226-amino-acid polypeptide reads, in one-letter code: Uracil-DNA glycosylase (226 aa).

Asp-64 acts as the Proton acceptor in catalysis.

It belongs to the uracil-DNA glycosylase (UDG) superfamily. UNG family.

It localises to the cytoplasm. It carries out the reaction Hydrolyzes single-stranded DNA or mismatched double-stranded DNA and polynucleotides, releasing free uracil.. Excises uracil residues from the DNA which can arise as a result of misincorporation of dUMP residues by DNA polymerase or due to deamination of cytosine. The protein is Uracil-DNA glycosylase of Proteus mirabilis (strain HI4320).